The primary structure comprises 640 residues: Threonine--tRNA ligase (640 aa).

Residues 1–61 enclose the TGS domain; that stretch reads MPTITLPDGS…ERDASLQIIT (61 aa). Residues 242 to 533 are catalytic; that stretch reads DHRRIGKQLD…LIEHYAGAFP (292 aa). Zn(2+) contacts are provided by Cys333, His384, and His510.

Belongs to the class-II aminoacyl-tRNA synthetase family. Homodimer. It depends on Zn(2+) as a cofactor.

It localises to the cytoplasm. The enzyme catalyses tRNA(Thr) + L-threonine + ATP = L-threonyl-tRNA(Thr) + AMP + diphosphate + H(+). Catalyzes the attachment of threonine to tRNA(Thr) in a two-step reaction: L-threonine is first activated by ATP to form Thr-AMP and then transferred to the acceptor end of tRNA(Thr). Also edits incorrectly charged L-seryl-tRNA(Thr). This Stutzerimonas stutzeri (strain A1501) (Pseudomonas stutzeri) protein is Threonine--tRNA ligase.